Consider the following 333-residue polypeptide: Type II restriction enzyme XcyI (333 aa).

The protein belongs to the XcyI type II restriction endonuclease family. As to quaternary structure, monomer. Mg(2+) is required as a cofactor.

The enzyme catalyses Endonucleolytic cleavage of DNA to give specific double-stranded fragments with terminal 5'-phosphates.. A P subtype restriction enzyme that recognizes the double-stranded sequence 5'-CCCGGG-3' and cleaves after C-1. The polypeptide is Type II restriction enzyme XcyI (xcyIR) (Xanthomonas campestris pv. cyanopsidis).